A 369-amino-acid chain; its full sequence is mRNA cap guanine-N(7) methyltransferase 1 (369 aa).

Residues 1–55 (MNKRPRDEPSSSFASAPKRQYGAGGGGYGGHGYSEERSSARRVADHYSARSNQTL) are disordered. Positions 22 to 32 (GAGGGGYGGHG) are enriched in gly residues. The span at 33 to 48 (YSEERSSARRVADHYS) shows a compositional bias: basic and acidic residues. Positions 61-340 (SPIIHLKKLN…LYLAFVLRKR (280 aa)) constitute an mRNA cap 0 methyltransferase domain. An mRNA-binding site is contributed by 70–71 (NN). S-adenosyl-L-methionine is bound by residues Lys74, Ala92, Asp114, 149 to 150 (DC), and 171 to 173 (QFA).

This sequence belongs to the class I-like SAM-binding methyltransferase superfamily. mRNA cap 0 methyltransferase family.

Its subcellular location is the nucleus. The enzyme catalyses a 5'-end (5'-triphosphoguanosine)-ribonucleoside in mRNA + S-adenosyl-L-methionine = a 5'-end (N(7)-methyl 5'-triphosphoguanosine)-ribonucleoside in mRNA + S-adenosyl-L-homocysteine. In terms of biological role, mRNA-capping methyltransferase that methylates the N7 position of the added guanosine to the 5'-cap structure of mRNAs. Binds RNA containing 5'-terminal GpppC. The protein is mRNA cap guanine-N(7) methyltransferase 1 of Oryza sativa subsp. japonica (Rice).